The chain runs to 146 residues: Hemoglobin subunit beta (146 aa).

The 145-residue stretch at 2–146 folds into the Globin domain; the sequence is QWSESERTII…VVSALGKQYH (145 aa). His63 and His92 together coordinate heme b.

It belongs to the globin family. In terms of assembly, heterotetramer of two alpha chains and two beta chains. Red blood cells.

Involved in oxygen transport from gills to the various peripheral tissues. The polypeptide is Hemoglobin subunit beta (hbb) (Pogonophryne scotti (Saddleback plunderfish)).